We begin with the raw amino-acid sequence, 88 residues long: Small ribosomal subunit protein uS15 (88 aa).

The span at 1–12 (MITQEEQQKIID) shows a compositional bias: basic and acidic residues. The disordered stretch occupies residues 1-24 (MITQEEQQKIIDRFGNGPNDTGTP).

Belongs to the universal ribosomal protein uS15 family. In terms of assembly, part of the 30S ribosomal subunit. Forms a bridge to the 50S subunit in the 70S ribosome, contacting the 23S rRNA.

One of the primary rRNA binding proteins, it binds directly to 16S rRNA where it helps nucleate assembly of the platform of the 30S subunit by binding and bridging several RNA helices of the 16S rRNA. Functionally, forms an intersubunit bridge (bridge B4) with the 23S rRNA of the 50S subunit in the ribosome. In Salinibacter ruber (strain DSM 13855 / M31), this protein is Small ribosomal subunit protein uS15.